We begin with the raw amino-acid sequence, 115 residues long: NADH-ubiquinone oxidoreductase chain 3 (115 aa).

Helical transmembrane passes span L3–W23, F55–L75, and L84–Y104.

It belongs to the complex I subunit 3 family. In terms of assembly, core subunit of respiratory chain NADH dehydrogenase (Complex I) which is composed of 45 different subunits. Interacts with TMEM186. Interacts with TMEM242.

Its subcellular location is the mitochondrion inner membrane. It carries out the reaction a ubiquinone + NADH + 5 H(+)(in) = a ubiquinol + NAD(+) + 4 H(+)(out). Core subunit of the mitochondrial membrane respiratory chain NADH dehydrogenase (Complex I) which catalyzes electron transfer from NADH through the respiratory chain, using ubiquinone as an electron acceptor. Essential for the catalytic activity of complex I. The chain is NADH-ubiquinone oxidoreductase chain 3 from Ailurus fulgens (Himalayan red panda).